Reading from the N-terminus, the 144-residue chain is Putative sugar phosphate isomerase RBE_0278 (144 aa).

H12 contacts substrate. The Proton donor role is filled by H101. Position 135 (R135) interacts with substrate.

It belongs to the LacAB/RpiB family.

The protein is Putative sugar phosphate isomerase RBE_0278 of Rickettsia bellii (strain RML369-C).